Consider the following 258-residue polypeptide: tRNA (guanine-N(1)-)-methyltransferase (258 aa).

S-adenosyl-L-methionine-binding positions include Gly-122 and 142–147 (LGDFVL).

This sequence belongs to the RNA methyltransferase TrmD family. As to quaternary structure, homodimer.

Its subcellular location is the cytoplasm. The enzyme catalyses guanosine(37) in tRNA + S-adenosyl-L-methionine = N(1)-methylguanosine(37) in tRNA + S-adenosyl-L-homocysteine + H(+). Its function is as follows. Specifically methylates guanosine-37 in various tRNAs. This chain is tRNA (guanine-N(1)-)-methyltransferase, found in Hahella chejuensis (strain KCTC 2396).